Reading from the N-terminus, the 215-residue chain is Octanoyltransferase (215 aa).

Residues 31-206 enclose the BPL/LPL catalytic domain; the sequence is PDSQDEIWLV…QLVKHLDYAE (176 aa). Substrate-binding positions include 70-77, 137-139, and 150-152; these read RGGQVTYH, SLG, and GLA. Residue Cys-168 is the Acyl-thioester intermediate of the active site.

Belongs to the LipB family.

It is found in the cytoplasm. The catalysed reaction is octanoyl-[ACP] + L-lysyl-[protein] = N(6)-octanoyl-L-lysyl-[protein] + holo-[ACP] + H(+). It participates in protein modification; protein lipoylation via endogenous pathway; protein N(6)-(lipoyl)lysine from octanoyl-[acyl-carrier-protein]: step 1/2. In terms of biological role, catalyzes the transfer of endogenously produced octanoic acid from octanoyl-acyl-carrier-protein onto the lipoyl domains of lipoate-dependent enzymes. Lipoyl-ACP can also act as a substrate although octanoyl-ACP is likely to be the physiological substrate. The chain is Octanoyltransferase from Pseudomonas putida (strain ATCC 700007 / DSM 6899 / JCM 31910 / BCRC 17059 / LMG 24140 / F1).